A 256-amino-acid chain; its full sequence is Small ribosomal subunit protein eS1A (256 aa).

An N-acetylalanine; partial modification is found at Ala2.

It belongs to the eukaryotic ribosomal protein eS1 family. As to quaternary structure, component of the small ribosomal subunit. Mature ribosomes consist of a small (40S) and a large (60S) subunit. The 40S subunit contains about 33 different proteins and 1 molecule of RNA (18S). The 60S subunit contains about 49 different proteins and 3 molecules of RNA (25S, 5.8S and 5S).

Its subcellular location is the cytoplasm. This Debaryomyces hansenii (strain ATCC 36239 / CBS 767 / BCRC 21394 / JCM 1990 / NBRC 0083 / IGC 2968) (Yeast) protein is Small ribosomal subunit protein eS1A.